A 499-amino-acid chain; its full sequence is Probable cytosol aminopeptidase (499 aa).

Mn(2+) is bound by residues Lys-268 and Asp-273. Lys-280 is an active-site residue. The Mn(2+) site is built by Asp-291, Asp-350, and Glu-352. Arg-354 is a catalytic residue.

The protein belongs to the peptidase M17 family. The cofactor is Mn(2+).

The protein resides in the cytoplasm. The enzyme catalyses Release of an N-terminal amino acid, Xaa-|-Yaa-, in which Xaa is preferably Leu, but may be other amino acids including Pro although not Arg or Lys, and Yaa may be Pro. Amino acid amides and methyl esters are also readily hydrolyzed, but rates on arylamides are exceedingly low.. It carries out the reaction Release of an N-terminal amino acid, preferentially leucine, but not glutamic or aspartic acids.. In terms of biological role, presumably involved in the processing and regular turnover of intracellular proteins. Catalyzes the removal of unsubstituted N-terminal amino acids from various peptides. The polypeptide is Probable cytosol aminopeptidase (Halorhodospira halophila (strain DSM 244 / SL1) (Ectothiorhodospira halophila (strain DSM 244 / SL1))).